We begin with the raw amino-acid sequence, 660 residues long: Pentatricopeptide repeat-containing protein At1g03560, mitochondrial (660 aa).

The N-terminal 12 residues, 1–12 (MRRFYRKPFSVP), are a transit peptide targeting the mitochondrion. 14 PPR repeats span residues 151 to 185 (NLEC…EFPM), 186 to 220 (TVSA…GIEP), 221 to 255 (TLYT…RIKP), 256 to 290 (DIVT…GHEA), 291 to 325 (DKIT…GIQV), 326 to 360 (PPHA…GSKP), 361 to 395 (NVAI…GFKP), 396 to 430 (DVVT…GLAI), 431 to 465 (NSMF…GCTR), 466 to 496 (DSYC…MEEE), 502 to 536 (TVYT…GITP), 537 to 571 (TAAC…GVIL), 574 to 605 (ACED…GREV), and 606 to 640 (PGRI…GYER).

Belongs to the PPR family. P subfamily.

It localises to the mitochondrion. The chain is Pentatricopeptide repeat-containing protein At1g03560, mitochondrial from Arabidopsis thaliana (Mouse-ear cress).